The following is a 202-amino-acid chain: Small heat shock protein hspG5 (202 aa).

The 172-residue stretch at 31–202 (KTIIDIIPPM…YSNTIKININ (172 aa)) folds into the sHSP domain. Residues 96–138 (TSSTTLDSKEDEASIEEFEDDIKPKSKSTVTTTATKENKEDEN) are disordered.

This sequence belongs to the small heat shock protein (HSP20) family.

The protein is Small heat shock protein hspG5 (hspG5) of Dictyostelium discoideum (Social amoeba).